A 466-amino-acid chain; its full sequence is MPHSWDYDAIVIGSGPGGEGAAMGLVKQGARVAVIERYHNVGGGCTHWGTIPSKALRHAVSRIIEFNQNPLYSDHSRLLRSSFADILNHADNVINQQTRMRQGFYERNHCEILQGNAHFVDENTLALECHDGTVETLTAEKFVIACGSRPYHPADVDFAHPRIYDSDSILSLHHEPRHVIIYGAGVIGCEYASIFRGMDVKVDLINTRDRLLAFLDQEMSDSLSYHFWNSGVVIRHNEEYEKIEGCDDGVIMHLKSGKKLKADCLLYANGRTGNTDSLALGNIGLETDSRGQLKVNSMYQTALPHIYAVGDVIGYPSLASAAYDQGRIAAQALVKGEATAHLIEDIPTGIYTIPEISSVGKTEQQLTAMKVPYEVGRAQFKHLARAQIVGMNVGTLKILFHRETKEILGIHCFGERAAEIIHIGQAIMEQKGGGNTIEYFVNTTFNYPTMAEAYRVAALNGLNRLF.

Position 36-45 (36-45 (ERYHNVGGGC)) interacts with FAD.

This sequence belongs to the class-I pyridine nucleotide-disulfide oxidoreductase family. The cofactor is FAD.

Its subcellular location is the cytoplasm. It carries out the reaction NAD(+) + NADPH = NADH + NADP(+). Its function is as follows. Conversion of NADPH, generated by peripheral catabolic pathways, to NADH, which can enter the respiratory chain for energy generation. In Citrobacter koseri (strain ATCC BAA-895 / CDC 4225-83 / SGSC4696), this protein is Soluble pyridine nucleotide transhydrogenase.